Here is a 294-residue protein sequence, read N- to C-terminus: 33 kDa chaperonin (294 aa).

2 disulfide bridges follow: Cys238–Cys240 and Cys271–Cys274.

Belongs to the HSP33 family. Post-translationally, under oxidizing conditions two disulfide bonds are formed involving the reactive cysteines. Under reducing conditions zinc is bound to the reactive cysteines and the protein is inactive.

The protein localises to the cytoplasm. Functionally, redox regulated molecular chaperone. Protects both thermally unfolding and oxidatively damaged proteins from irreversible aggregation. Plays an important role in the bacterial defense system toward oxidative stress. This chain is 33 kDa chaperonin, found in Clostridium novyi (strain NT).